A 60-amino-acid chain; its full sequence is Large ribosomal subunit protein bL32 (60 aa).

The disordered stretch occupies residues 1–60; that stretch reads MAVQQNKKTPSKRGMHRSHDFLVAPQLSVEQTTGETHMRHHISPNGFYRGRKVLKTKNDE. Basic residues predominate over residues 49–60; sequence RGRKVLKTKNDE.

Belongs to the bacterial ribosomal protein bL32 family.

The chain is Large ribosomal subunit protein bL32 from Herminiimonas arsenicoxydans.